Here is a 573-residue protein sequence, read N- to C-terminus: MLRLPTVFRQMRPVSRVLAPHLTRAYAKDVKFGADARALMLRGVDLLADAVAVTMGPKGRTVIIEQSWGSPKVTKDGVTVAKSIDLKDKYKNIGAKLVQDVANNTNEEAGDGTTTATVLARSIAKEGFEKISKGANPVEIRRGVMLAVDAVIAELKKQSKPVTTPEEIAQVATISANGDKEIGNIISDAMKKVGRKGVITVKDGKTLNDELEIIEGMKFDRGYISPYFINTSKGQKCEFQDAYVLLSEKKISSVQSIVPALEIANAHRKPLVIIAEDVDGEALSTLVLNRLKVGLQVVAVKAPGFGDNRKNQLKDMAIATGGAVFGEEGLTLNLEDVQPHDLGKVGEVIVTKDDAMLLEGKGDKAQIEKRIQEIIEQLDVTTSEYEKEKLNERLAKLSDGVAVLKVGGTSDVEVNEKKDRVTDALNATRAAAEEGIVLGGGCALLRCIPALDSLTPANEDQKIGIEIIKRTLKIPAMTIAKNAGVEGSLIVEKIMQSSSEVGYDAMVGDFVNMVGKGIIDPTKVVRTALLDAAGVASLLTTAEVVVTEIPKEEKDPGMGAMGGMGGGMGGGMF.

Residues 1-26 (MLRLPTVFRQMRPVSRVLAPHLTRAY) constitute a mitochondrion transit peptide. Lysine 31 bears the N6-succinyllysine mark. Phosphoserine occurs at positions 67 and 70. Lysine 75 contributes to the ATP binding site. N6-acetyllysine is present on lysine 75. N6-acetyllysine; alternate is present on lysine 82. Residue lysine 82 is modified to N6-succinyllysine; alternate. Residue lysine 87 is modified to N6-acetyllysine. Tyrosine 90 is modified (phosphotyrosine). Lysine 91 carries the N6-acetyllysine modification. 111–115 (DGTTT) serves as a coordination point for ATP. N6-acetyllysine; alternate is present on lysine 125. Lysine 125 is subject to N6-succinyllysine; alternate. Lysine 130 carries the post-translational modification N6-acetyllysine. Lysine 133 carries the N6-acetyllysine; alternate modification. An N6-succinyllysine; alternate modification is found at lysine 133. Lysine 133 is modified (N6-malonyllysine; alternate). N6-acetyllysine is present on lysine 156. N6-acetyllysine; alternate occurs at positions 191, 202, 205, 218, and 236. 5 positions are modified to N6-succinyllysine; alternate: lysine 191, lysine 202, lysine 205, lysine 218, and lysine 236. An N6-acetyllysine modification is found at lysine 249. N6-acetyllysine; alternate is present on lysine 250. Lysine 250 carries the post-translational modification N6-succinyllysine; alternate. N6-acetyllysine occurs at positions 269 and 292. The residue at position 301 (lysine 301) is an N6-succinyllysine. An N6-acetyllysine modification is found at lysine 314. Lysine 352 carries the N6-acetyllysine; alternate modification. Lysine 352 is modified (N6-succinyllysine; alternate). Lysine 389 carries the post-translational modification N6-acetyllysine. Residue lysine 396 is modified to N6-acetyllysine; alternate. An N6-succinyllysine; alternate modification is found at lysine 396. At serine 410 the chain carries Phosphoserine. Glycine 440 serves as a coordination point for ATP. Lysine 469 carries the post-translational modification N6-acetyllysine. N6-acetyllysine; alternate is present on lysine 481. Lysine 481 is subject to N6-succinyllysine; alternate. A Phosphoserine modification is found at serine 488. Aspartate 520 is an ATP binding site. A Glycyl lysine isopeptide (Lys-Gly) (interchain with G-Cter in SUMO2) cross-link involves residue lysine 551.

Belongs to the chaperonin (HSP60) family. In terms of assembly, homoheptamer arranged in a ring structure. The functional units of these chaperonins consist of heptameric rings of the large subunit Hsp60, which function as a back-to-back double ring. Interacts with 2 heptameric Hsp10 rings to form the symmetrical football complex. Interacts with HRAS. Interacts with ATAD3A. Interacts with ETFBKMT and EEF1AKMT3. Interacts with MFHAS1.

Its subcellular location is the mitochondrion matrix. The enzyme catalyses ATP + H2O + a folded polypeptide = ADP + phosphate + an unfolded polypeptide.. In terms of biological role, chaperonin implicated in mitochondrial protein import and macromolecular assembly. Together with Hsp10, facilitates the correct folding of imported proteins. May also prevent misfolding and promote the refolding and proper assembly of unfolded polypeptides generated under stress conditions in the mitochondrial matrix. The functional units of these chaperonins consist of heptameric rings of the large subunit Hsp60, which function as a back-to-back double ring. In a cyclic reaction, Hsp60 ring complexes bind one unfolded substrate protein per ring, followed by the binding of ATP and association with 2 heptameric rings of the co-chaperonin Hsp10. This leads to sequestration of the substrate protein in the inner cavity of Hsp60 where, for a certain period of time, it can fold undisturbed by other cell components. Synchronous hydrolysis of ATP in all Hsp60 subunits results in the dissociation of the chaperonin rings and the release of ADP and the folded substrate protein. This Pongo abelii (Sumatran orangutan) protein is 60 kDa heat shock protein, mitochondrial (HSPD1).